The chain runs to 750 residues: Dual specificity tyrosine-phosphorylation-regulated kinase 1A (750 aa).

Disordered regions lie at residues 56-81 (ALPY…RDPA) and 104-129 (YAKK…KVYN). A Bipartite nuclear localization signal motif is present at residues 109 to 126 (RRHQQGQGDDSSHKKERK). In terms of domain architecture, Protein kinase spans 151 to 471 (YEIDSLIGKG…PYYALQHSFF (321 aa)). Residues 157–165 (IGKGSFGQV), lysine 180, and 230–233 (FEML) contribute to the ATP site. Aspartate 279 serves as the catalytic Proton acceptor. 4 disordered regions span residues 400-434 (TKDG…AGES), 477-531 (EGTN…RHSG), 583-666 (SQKN…GNQA), and 731-750 (DRED…VASS). Residues 477 to 493 (EGTNTSNSVSTSPAMEQ) show a composition bias toward polar residues. Over residues 494–517 (SQSSGTTSSTSSSSGGSSGTSNSG) the composition is skewed to low complexity. The interval 584 to 612 (QKNVPHHHGNGSHHHHHHHHHHHGQHILS) is histidine-rich domain (HRD). Basic residues predominate over residues 587 to 608 (VPHHHGNGSHHHHHHHHHHHGQ). Positions 610-621 (ILSNRTRTRIYN) are enriched in polar residues. Residues 622–659 (SPSTSSSTQDSMDIGNSHHSMTSLSSSTTSSSTSSSST) show a composition bias toward low complexity. Residues 741 to 750 (CVQQSPVASS) show a composition bias toward polar residues.

Belongs to the protein kinase superfamily. CMGC Ser/Thr protein kinase family. MNB/DYRK subfamily. Autophosphorylated on tyrosine residues.

The protein localises to the nucleus. Its subcellular location is the nucleus speckle. The catalysed reaction is L-seryl-[protein] + ATP = O-phospho-L-seryl-[protein] + ADP + H(+). It catalyses the reaction L-threonyl-[protein] + ATP = O-phospho-L-threonyl-[protein] + ADP + H(+). It carries out the reaction L-tyrosyl-[protein] + ATP = O-phospho-L-tyrosyl-[protein] + ADP + H(+). The enzyme catalyses [DNA-directed RNA polymerase] + ATP = phospho-[DNA-directed RNA polymerase] + ADP + H(+). Its function is as follows. Dual-specificity kinase which possesses both serine/threonine and tyrosine kinase activities. Exhibits a substrate preference for proline at position P+1 and arginine at position P-3. Plays an important role in double-strand breaks (DSBs) repair following DNA damage. Mechanistically, phosphorylates RNF169 and increases its ability to block accumulation of TP53BP1 at the DSB sites thereby promoting homologous recombination repair (HRR). Also acts as a positive regulator of transcription by acting as a CTD kinase that mediates phosphorylation of the CTD (C-terminal domain) of the large subunit of RNA polymerase II (RNAP II) POLR2A. Modulates alternative splicing by phosphorylating the splice factor SRSF6. Phosphorylates SEPTIN4, SEPTIN5 and SF3B1. This Xenopus laevis (African clawed frog) protein is Dual specificity tyrosine-phosphorylation-regulated kinase 1A.